We begin with the raw amino-acid sequence, 143 residues long: Large ribosomal subunit protein uL11 (143 aa).

The protein belongs to the universal ribosomal protein uL11 family. As to quaternary structure, part of the ribosomal stalk of the 50S ribosomal subunit. Interacts with L10 and the large rRNA to form the base of the stalk. L10 forms an elongated spine to which L12 dimers bind in a sequential fashion forming a multimeric L10(L12)X complex. One or more lysine residues are methylated.

Functionally, forms part of the ribosomal stalk which helps the ribosome interact with GTP-bound translation factors. The polypeptide is Large ribosomal subunit protein uL11 (Paraburkholderia xenovorans (strain LB400)).